The primary structure comprises 71 residues: MFTTKKSMLLFFFLGTISLSLCEQERGADEDDGVEMTEEEVKRGIMDTVKNVAKNLAGQLLDKLKCKITAC.

A signal peptide spans M1 to C22. Positions E23 to V41 are excised as a propeptide. An intrachain disulfide couples C66 to C71.

In terms of tissue distribution, expressed by the skin glands.

The protein resides in the secreted. Functionally, may have antimicrobial activity against the Gram-negative bacterium E.coli. The polypeptide is Ranatuerin-2PLa (Lithobates palustris (Pickerel frog)).